Here is a 416-residue protein sequence, read N- to C-terminus: Cysteate synthase (416 aa).

The residue at position 104 (Lys104) is an N6-(pyridoxal phosphate)lysine. Pyridoxal 5'-phosphate is bound at residue Asn130.

It belongs to the threonine synthase family. Cysteate synthase subfamily. In terms of assembly, homotrimer. Pyridoxal 5'-phosphate is required as a cofactor.

The catalysed reaction is O-phospho-L-serine + sulfite + H(+) = L-cysteate + phosphate. Its pathway is cofactor biosynthesis; coenzyme M biosynthesis. In terms of biological role, specifically catalyzes the beta-elimination of phosphate from L-phosphoserine and the beta-addition of sulfite to the dehydroalanine intermediate to produce L-cysteate. This Methanosarcina mazei (strain ATCC BAA-159 / DSM 3647 / Goe1 / Go1 / JCM 11833 / OCM 88) (Methanosarcina frisia) protein is Cysteate synthase.